The sequence spans 2850 residues: Mucin-6 (2850 aa).

An N-terminal signal peptide occupies residues 1-22 (MLRVRQLLLLLLFRGPLIDAGA). One can recognise a VWFD 1 domain in the interval 43–256 (GWCSTWGAGH…KLDDPNEICA (214 aa)). 2 disulfides stabilise this stretch: cysteine 45–cysteine 218 and cysteine 67–cysteine 255. Asparagine 94 carries N-linked (GlcNAc...) asparagine glycosylation. Residues 160–183 (HLTEGQGGDEVGTPGTLKQESKGS) form a disordered region. Asparagine 310 is a glycosylation site (N-linked (GlcNAc...) asparagine). The 56-residue stretch at 344-399 (CPANQVYQECGEVCIKTCSNPQHSCSSPCTFGCFCPHGTLLDDISGNQSCVPVNQC) folds into the TIL 1 domain. Residues 437 to 621 (GHCSLEGGSF…ALEREMDPCS (185 aa)) enclose the VWFD 2 domain. Intrachain disulfides connect cysteine 439/cysteine 575 and cysteine 461/cysteine 620. N-linked (GlcNAc...) asparagine glycosylation is found at asparagine 528 and asparagine 701. A TIL 2 domain is found at 806-869 (CPEPKTFQSC…DGQCVPAEEC (64 aa)). Positions 908–1080 (STCVLYGEGH…NSWKESPLCG (173 aa)) constitute a VWFD 3 domain. 4 disulfides stabilise this stretch: cysteine 910–cysteine 1044, cysteine 932–cysteine 1079, cysteine 941–cysteine 1041, and cysteine 959–cysteine 966. 2 N-linked (GlcNAc...) asparagine glycosylation sites follow: asparagine 1017 and asparagine 1221. Residues 1263–1281 (EFHSSTSANTPVAPSYLPG) show a composition bias toward low complexity. Disordered regions lie at residues 1263–1363 (EFHS…TAEL), 1377–1400 (GMST…THRV), 1466–1504 (VSAN…PSTT), 1580–1600 (TPPV…RTTH), 1626–1650 (IASP…TSSV), 1705–1813 (TKTS…SLST), 1877–1942 (QTKS…RTTH), 1968–1992 (IASP…TSSV), 2049–2119 (TSFS…PSTT), 2219–2254 (QTKS…TTNS), 2276–2295 (IAHT…SSTT), 2306–2338 (EQST…SPTD), 2370–2473 (TTPP…FRTP), 2511–2621 (PTNP…TFVS), 2634–2674 (PTIH…KSTT), and 2692–2761 (STMG…GTCS). Positions 1294–1312 (EELTVWTTPKESTVSSGEY) are enriched in polar residues. Positions 1345 to 1363 (TSKPTASSLSSSTKTTAEL) are enriched in low complexity. 2 stretches are compositionally biased toward polar residues: residues 1378 to 1399 (MSTS…TTHR) and 1466 to 1484 (VSAN…PVVH). 8 consecutive repeat copies span residues 1440-1555 (TQNL…PTTE), 1556-1712 (GLNT…FSTD), 1713-1885 (RTST…FSTD), 1886-2054 (RTSA…FSTD), 2055-2227 (RTST…FSTD), 2228-2396 (RTST…FSTE), 2397-2563 (RTST…FPTT), and 2564-2671 (RTST…FSSK). The interval 1440 to 2671 (TQNLFSTAPH…VPTFSSFSSK (1232 aa)) is approximate repeats. Positions 1485–1504 (TTSGTSSSPQTPRTTHPSTT) are enriched in low complexity. Residues 1626–1639 (IASPTPSAPQTSLA) are compositionally biased toward polar residues. The span at 1705–1719 (TKTSFSTDRTSTSTS) shows a compositional bias: low complexity. Over residues 1720 to 1757 (APHLSETSAVTAHQSTPTAVSANSIKPTMSSTGTPVVH) the composition is skewed to polar residues. Residues 1758-1777 (TTSGTTSSPQTPRTTHPSTT) show a composition bias toward low complexity. Polar residues predominate over residues 1778–1813 (VAVSGTVHTTGLPSGTSVHTTTNFPTHSGPQSSLST). Residues 1893-1942 (SQPSTVTPTQSTPIPATTNSLMTTGGLTGTPPVHTTSGTTSSPQTPRTTH) show a composition bias toward low complexity. A compositionally biased stretch (polar residues) spans 1968 to 1981 (IASPTPSAPQTSLA). A compositionally biased stretch (low complexity) spans 2049-2061 (TSFSTDRTSTSTS). Residues 2062–2099 (APHLSETSAVTAHQSTPTAVSANSIKPTMSSTGTPVVH) are compositionally biased toward polar residues. The span at 2100-2119 (TTSGTTSSPQTPRTTHPSTT) shows a compositional bias: low complexity. Residues 2227-2238 (DRTSTPHLSQSS) show a composition bias toward polar residues. Positions 2282–2295 (TTHSLPTAASSSTT) are enriched in low complexity. The segment covering 2370–2384 (TTPPNTSTPVTHSTS) has biased composition (low complexity). Residues 2385–2429 (ATTEAQGSFSTERTSTSYLSHPSSTTVHQSTAGPVITSIKSTMGV) are compositionally biased toward polar residues. Low complexity predominate over residues 2436–2456 (HTTSGTTSSPQTPHSTHPIST). Residues 2457 to 2466 (AAISRTTGIS) are compositionally biased toward polar residues. The span at 2516–2533 (SVSSASTSRPLSTSLPTT) shows a compositional bias: low complexity. Over residues 2534-2560 (IKGTGTPQTPVSDINTTSATTQAHSSF) the composition is skewed to polar residues. Positions 2561 to 2584 (PTTRTSTSHLSLPSSMTSTLTPAS) are enriched in low complexity. Over residues 2585 to 2601 (RSASTLQYTPTPSSVSH) the composition is skewed to polar residues. Positions 2639 to 2674 (TPTPSSRPTSSTGLLSTSKTTSHVPTFSSFSSKSTT) are enriched in low complexity. The segment covering 2692–2725 (STMGMTNLPSSGSPDINHTTRPPGSSPLPTSAFL) has biased composition (polar residues). A compositionally biased stretch (low complexity) spans 2726–2759 (SRSTSPTGSSSPSTPVSSSNPDSSVSSPPSHPGT). 4 disulfide bridges follow: cysteine 2760–cysteine 2807, cysteine 2774–cysteine 2821, cysteine 2783–cysteine 2841, and cysteine 2787–cysteine 2843. The region spanning 2760–2849 (CSLQEEEHQI…SCVCSPLQCK (90 aa)) is the CTCK domain.

As to quaternary structure, multimer; disulfide-linked. In terms of processing, O-glycosylated. As to expression, expressed in stomach, duodenum and small intestine.

The protein resides in the secreted. Its function is as follows. May provide a mechanism for modulation of the composition of the protective mucus layer related to acid secretion or the presence of bacteria and noxious agents in the lumen. Plays an important role in the cytoprotection of epithelial surfaces and are used as tumor markers in a variety of cancers. May play a role in epithelial organogenesis. In Mus musculus (Mouse), this protein is Mucin-6 (Muc6).